Reading from the N-terminus, the 77-residue chain is MGLCFPCPAESAPPSPSPEEKREKLAEAAERRQKEAATRGILDIQSVEAKKKKKEQLEKQMATSGPPTAGGLRWTVS.

Residues 1–77 (MGLCFPCPAE…TAGGLRWTVS (77 aa)) are disordered. Gly-2 carries the N-myristoyl glycine lipid modification. Residues Cys-4 and Cys-7 are each lipidated (S-palmitoyl cysteine). A compositionally biased stretch (basic and acidic residues) spans 18–37 (PEEKREKLAEAAERRQKEAA). Residues 21–33 (KREKLAEAAERRQ) are VCP/p97-interacting motif (VIM). Ser-46 carries the phosphoserine modification.

This sequence belongs to the SVIP family. As to quaternary structure, interacts (via VIM motif) with VCP/p97. Forms a complex with VCP/p97 and DERL1. In terms of tissue distribution, highly expressed in the medulla spinalis, adrenal gland, cerebrum, cerebellum, and sciatic nerve.

Its subcellular location is the membrane. The protein resides in the smooth endoplasmic reticulum membrane. It is found in the golgi apparatus membrane. The protein localises to the cell membrane. It localises to the lysosome membrane. Functionally, negative regulator of the ER-associated degradation pathway (ERAD) of misfolded proteins. It competes with AMFR/gp78 for binding VCP/p97, and inhibits AMFR/gp78-VCP/p97 complex formation that is required for degradation of ERAD substrates. Involved in the regulation of adrenal cortisol and dehydroepiandrosterone (DHEA) biosynthesis. The chain is Small VCP/p97-interacting protein (Svip) from Mus musculus (Mouse).